Consider the following 557-residue polypeptide: NADH-quinone oxidoreductase subunit C/D (557 aa).

Residues 1 to 13 (MSLEEQQSDDPAE) are compositionally biased toward acidic residues. The segment at 1-20 (MSLEEQQSDDPAELESGVSR) is disordered. Positions 1-174 (MSLEEQQSDD…ATLREHANPL (174 aa)) are NADH dehydrogenase I subunit C. Residues 184-557 (NTMYINIGPH…LDIVLGEVDR (374 aa)) form an NADH dehydrogenase I subunit D region. Lys-517 is covalently cross-linked (Glycyl lysine isopeptide (Lys-Gly) (interchain with G-Cter in SAMP2)).

The protein in the N-terminal section; belongs to the complex I 30 kDa subunit family. In the C-terminal section; belongs to the complex I 49 kDa subunit family. As to quaternary structure, NDH-1 is composed of 13 different subunits. Subunits NuoB, CD, E, F, and G constitute the peripheral sector of the complex.

Its subcellular location is the cell membrane. The catalysed reaction is a quinone + NADH + 5 H(+)(in) = a quinol + NAD(+) + 4 H(+)(out). NDH-1 shuttles electrons from NADH, via FMN and iron-sulfur (Fe-S) centers, to quinones in the respiratory chain. Couples the redox reaction to proton translocation (for every two electrons transferred, four hydrogen ions are translocated across the cytoplasmic membrane), and thus conserves the redox energy in a proton gradient. In Haloferax volcanii (strain ATCC 29605 / DSM 3757 / JCM 8879 / NBRC 14742 / NCIMB 2012 / VKM B-1768 / DS2) (Halobacterium volcanii), this protein is NADH-quinone oxidoreductase subunit C/D (nuoCD).